A 1116-amino-acid polypeptide reads, in one-letter code: Angiopoietin-1 receptor (1116 aa).

An N-terminal signal peptide occupies residues 1-21; sequence MCLLDSCTALLLLGCWMSGSA. At 22–745 the chain is on the extracellular side; that stretch reads VRISDVTLVN…FAAHGHLLLY (724 aa). Cys-46 and Cys-106 are disulfide-bonded. The Ig-like C2-type 1 domain maps to 46–126; it reads CVSSDWSSGG…YTYKMLQEAA (81 aa). Residues Asn-110, Asn-143, and Asn-223 are each glycosylated (N-linked (GlcNAc...) asparagine). 3 consecutive EGF-like domains span residues 214–256, 258–302, and 304–342; these read SCRA…HTCD, VCGE…LSCN, and ACPD…SRCE. Intrachain disulfides connect Cys-215-Cys-224, Cys-228-Cys-237, Cys-231-Cys-244, Cys-246-Cys-255, Cys-259-Cys-268, Cys-272-Cys-277, Cys-283-Cys-290, Cys-292-Cys-301, Cys-305-Cys-314, Cys-318-Cys-325, Cys-320-Cys-331, and Cys-333-Cys-341. In terms of domain architecture, Ig-like C2-type 2 spans 348 to 438; sequence PVISHLRDVE…MQVEDEFTVE (91 aa). Asn-367, Asn-387, and Asn-425 each carry an N-linked (GlcNAc...) asparagine glycan. Cys-368 and Cys-422 are disulfide-bonded. 3 Fibronectin type-III domains span residues 444–538, 540–633, and 634–729; these read RPQN…TQVL, LPVG…QLPP, and PPAN…TLPQ. N-linked (GlcNAc...) asparagine glycans are attached at residues Asn-590, Asn-637, and Asn-642. The chain crosses the membrane as a helical span at residues 746–766; it reads AILGSAGMTCCTVLLAFCIVL. The Cytoplasmic segment spans residues 767–1116; sequence QLKRNTLQRR…GIDCSAEEAG (350 aa). One can recognise a Protein kinase domain in the interval 816–1095; that stretch reads IQFQDVLGEG…RMLEERKTYV (280 aa). ATP-binding positions include 822–830 and Lys-847; that span reads LGEGNFGQV. A Phosphotyrosine; by autocatalysis modification is found at Tyr-852. Asp-956 functions as the Proton acceptor in the catalytic mechanism. Tyr-984, Tyr-1094, and Tyr-1100 each carry phosphotyrosine; by autocatalysis.

The protein belongs to the protein kinase superfamily. Tyr protein kinase family. Tie subfamily. Interacts with svep1. Post-translationally, autophosphorylated on tyrosine residues in response to ligand binding. Autophosphorylation occurs in trans, i.e. one subunit of the dimeric receptor phosphorylates tyrosine residues on the other subunit. Autophosphorylation occurs in a sequential manner, where Tyr-984 in the kinase activation loop is phosphorylated first, followed by autophosphorylation at additional tyrosine residues. Phosphorylation is important for interaction with scaffold proteins and effectors.

The protein resides in the cell membrane. It localises to the cell junction. Its subcellular location is the focal adhesion. It is found in the cytoplasm. The protein localises to the cytoskeleton. The catalysed reaction is L-tyrosyl-[protein] + ATP = O-phospho-L-tyrosyl-[protein] + ADP + H(+). Its activity is regulated as follows. Angiopoietin binding leads to receptor dimerization and activation by autophosphorylation at Tyr-984 on the kinase activation loop. In terms of biological role, tyrosine-protein kinase that acts as a cell-surface receptor for angiopoietins and regulates angiogenesis, endothelial cell survival, proliferation, migration, adhesion and cell spreading, reorganization of the actin cytoskeleton, but also maintenance of vascular quiescence. Can activate or inhibit angiogenesis, depending on the context. Angiopoietin signaling triggers receptor dimerization and autophosphorylation at specific tyrosine residues that then serve as binding sites for scaffold proteins and effectors. This Danio rerio (Zebrafish) protein is Angiopoietin-1 receptor.